The following is a 254-amino-acid chain: MSTPFYVSPQQAMADRAEYARKGIARGRSLVVLQYADGIVFVGENPSRALHKFSEIYDRIGFAAAGKYNEYENLRIGGVRYADLRGYTYDRDDVTARGLANVYAQTLGTIFSSQAEKPYEVELVVAEVGDSPENDQIYRLPHDGSIVDEHGSVAVGGNAEQISGYLDQRHRDGMTLAEALKLAVQALSRDTNGTEREIPAERLEVAVLDRTRPQQRKFKRIVGGQLSRLLESGAASADGEAETEAETDSGSDEE.

Positions 231-254 (ESGAASADGEAETEAETDSGSDEE) are disordered. Residues 239–254 (GEAETEAETDSGSDEE) show a composition bias toward acidic residues.

The protein belongs to the peptidase T1A family. The 20S proteasome core is composed of 14 alpha and 14 beta subunits that assemble into four stacked heptameric rings, resulting in a barrel-shaped structure. The two inner rings, each composed of seven catalytic beta subunits, are sandwiched by two outer rings, each composed of seven alpha subunits. The catalytic chamber with the active sites is on the inside of the barrel. Has probably a gated structure, the ends of the cylinder being occluded by the N-termini of the alpha-subunits. Is likely capped by the proteasome-associated ATPase, ARC. In terms of processing, the N-terminus is blocked.

Its subcellular location is the cytoplasm. Its pathway is protein degradation; proteasomal Pup-dependent pathway. Its activity is regulated as follows. The formation of the proteasomal ATPase ARC-20S proteasome complex, likely via the docking of the C-termini of ARC into the intersubunit pockets in the alpha-rings, may trigger opening of the gate for substrate entry. Interconversion between the open-gate and close-gate conformations leads to a dynamic regulation of the 20S proteasome proteolysis activity. Peptidolytic activity is completely inhibited by lactacystin, and to a lesser extent, by N-acetyl-Leu-Leu-norleucinal (Ac-LLnL) and benzoyloxycarbonyl-Leu-Leu-Leu-vinylsulfone (Z-LLL-VS) in vitro. Component of the proteasome core, a large protease complex with broad specificity involved in protein degradation. The S.coelicolor proteasome is able to cleave oligopeptides after hydrophobic residues, but not after basic or acidic residues, thus displaying chymotrypsin-like activity but not trypsin-like activity. The sequence is that of Proteasome subunit alpha from Streptomyces coelicolor (strain ATCC BAA-471 / A3(2) / M145).